Consider the following 184-residue polypeptide: Protein Syd (184 aa).

This sequence belongs to the Syd family.

It localises to the cell inner membrane. Interacts with the SecY protein in vivo. May bind preferentially to an uncomplexed state of SecY, thus functioning either as a chelating agent for excess SecY in the cell or as a regulatory factor that negatively controls the translocase function. This is Protein Syd from Edwardsiella ictaluri (strain 93-146).